Reading from the N-terminus, the 401-residue chain is Dual-specificity RNA methyltransferase RlmN (401 aa).

Glutamate 114 serves as the catalytic Proton acceptor. The 246-residue stretch at 120 to 365 folds into the Radical SAM core domain; it reads DKGRGTLCVS…TMVRRTRGDD (246 aa). Cysteines 127 and 370 form a disulfide. Cysteine 134, cysteine 138, and cysteine 141 together coordinate [4Fe-4S] cluster. Residues 187–188, serine 219, 241–243, and asparagine 327 each bind S-adenosyl-L-methionine; these read GE and SLH. The S-methylcysteine intermediate role is filled by cysteine 370.

The protein belongs to the radical SAM superfamily. RlmN family. The cofactor is [4Fe-4S] cluster.

It localises to the cytoplasm. It catalyses the reaction adenosine(2503) in 23S rRNA + 2 reduced [2Fe-2S]-[ferredoxin] + 2 S-adenosyl-L-methionine = 2-methyladenosine(2503) in 23S rRNA + 5'-deoxyadenosine + L-methionine + 2 oxidized [2Fe-2S]-[ferredoxin] + S-adenosyl-L-homocysteine. The enzyme catalyses adenosine(37) in tRNA + 2 reduced [2Fe-2S]-[ferredoxin] + 2 S-adenosyl-L-methionine = 2-methyladenosine(37) in tRNA + 5'-deoxyadenosine + L-methionine + 2 oxidized [2Fe-2S]-[ferredoxin] + S-adenosyl-L-homocysteine. Its function is as follows. Specifically methylates position 2 of adenine 2503 in 23S rRNA and position 2 of adenine 37 in tRNAs. m2A2503 modification seems to play a crucial role in the proofreading step occurring at the peptidyl transferase center and thus would serve to optimize ribosomal fidelity. This chain is Dual-specificity RNA methyltransferase RlmN, found in Xanthomonas axonopodis pv. citri (strain 306).